A 328-amino-acid polypeptide reads, in one-letter code: Ornithine transcarbamylase, mitochondrial (328 aa).

Residues 1–6 constitute a mitochondrion transit peptide; sequence GGQPLQ. Lysine 44 carries the post-translational modification N6-acetyllysine; alternate. Lysine 44 is subject to N6-succinyllysine; alternate. Lysine 54 is modified (N6-succinyllysine). Lysine 62 is modified (N6-acetyllysine; alternate). N6-succinyllysine; alternate is present on lysine 62. 64–68 is a binding site for carbamoyl phosphate; sequence STRTR. A Phosphoserine modification is found at serine 107. Arginine 115 lines the carbamoyl phosphate pocket. Arginine 115 contributes to the L-ornithine binding site. The residue at position 118 (lysine 118) is an N6-acetyllysine; alternate. Lysine 118 is subject to N6-succinyllysine; alternate. Residue histidine 142 participates in carbamoyl phosphate binding. Residue asparagine 173 participates in L-ornithine binding. Residues lysine 195, lysine 205, and lysine 212 each carry the N6-acetyllysine; alternate modification. 3 positions are modified to N6-succinyllysine; alternate: lysine 195, lysine 205, and lysine 212. 237-241 serves as a coordination point for L-ornithine; it reads DTWIS. An N6-succinyllysine mark is found at lysine 248 and lysine 263. 276–279 lines the L-ornithine pocket; it reads HCLP. Residue cysteine 277 is part of the active site. Lysine 281 carries the N6-acetyllysine; alternate modification. Position 281 is an N6-succinyllysine; alternate (lysine 281). Residue arginine 304 coordinates carbamoyl phosphate. L-ornithine is bound at residue arginine 304.

It belongs to the aspartate/ornithine carbamoyltransferase superfamily. OTCase family. As to quaternary structure, homotrimer. Acetylation at Lys-62 negatively regulates ornithine carbamoyltransferase activity in response to nutrient signals.

The protein localises to the mitochondrion matrix. The catalysed reaction is carbamoyl phosphate + L-ornithine = L-citrulline + phosphate + H(+). The protein operates within nitrogen metabolism; urea cycle; L-citrulline from L-ornithine and carbamoyl phosphate: step 1/1. Negatively regulated by lysine acetylation. In terms of biological role, catalyzes the second step of the urea cycle, the condensation of carbamoyl phosphate with L-ornithine to form L-citrulline. The urea cycle ensures the detoxification of ammonia by converting it to urea for excretion. This chain is Ornithine transcarbamylase, mitochondrial, found in Sus scrofa (Pig).